The chain runs to 59 residues: Probable stress-associated endoplasmic reticulum protein (59 aa).

The segment at 1–30 (MSQSRTLRQKSQKYQENIEKRGVASPKKKE) is disordered. The Cytoplasmic portion of the chain corresponds to 1 to 34 (MSQSRTLRQKSQKYQENIEKRGVASPKKKEDGLN). Residues 16-30 (ENIEKRGVASPKKKE) are compositionally biased toward basic and acidic residues. A helical; Anchor for type IV membrane protein membrane pass occupies residues 35 to 55 (INPYVLGFIIFVVVGSTLLQI). Topologically, residues 56 to 59 (LKGQ) are extracellular.

It belongs to the RAMP4 family.

The protein resides in the membrane. Its subcellular location is the endoplasmic reticulum membrane. Functionally, may interact with target proteins during translocation into the lumen of the endoplasmic reticulum. May protect unfolded target proteins against degradation and facilitate correct glycosylation. In Dictyostelium discoideum (Social amoeba), this protein is Probable stress-associated endoplasmic reticulum protein (serp).